Consider the following 193-residue polypeptide: Adenylate kinase (193 aa).

11–16 (GAGKGT) contributes to the ATP binding site. Residues 31–60 (STGDLLRAEVKAQTPLGCQAKVYMDAGELV) are NMP. AMP is bound by residues Thr-32, Arg-37, 58 to 60 (ELV), 85 to 88 (GFPR), and Gln-92. The interval 126–136 (ARGKEQGRSDD) is LID. Residue Arg-127 participates in ATP binding. Arg-133 and Arg-145 together coordinate AMP. Gln-173 provides a ligand contact to ATP.

Belongs to the adenylate kinase family. In terms of assembly, monomer.

The protein localises to the cytoplasm. It carries out the reaction AMP + ATP = 2 ADP. It participates in purine metabolism; AMP biosynthesis via salvage pathway; AMP from ADP: step 1/1. In terms of biological role, catalyzes the reversible transfer of the terminal phosphate group between ATP and AMP. Plays an important role in cellular energy homeostasis and in adenine nucleotide metabolism. The sequence is that of Adenylate kinase from Synechococcus sp. (strain JA-2-3B'a(2-13)) (Cyanobacteria bacterium Yellowstone B-Prime).